A 908-amino-acid chain; its full sequence is Bifunctional uridylyltransferase/uridylyl-removing enzyme (908 aa).

Residues 1-360 form a uridylyltransferase region; that stretch reads MFDTPAVFAR…LERIFRRRRR (360 aa). The segment at 361–718 is uridylyl-removing; it reads IKQGYKVVRG…LDPDEDRDAT (358 aa). The 123-residue stretch at 477–599 folds into the HD domain; that stretch reads VDEHTIQTIV…VQTTKRLDLL (123 aa). 2 ACT domains span residues 719-801 and 829-904; these read RACF…LKSR and IIEV…GAER.

Belongs to the GlnD family. Mg(2+) is required as a cofactor.

It catalyses the reaction [protein-PII]-L-tyrosine + UTP = [protein-PII]-uridylyl-L-tyrosine + diphosphate. The catalysed reaction is [protein-PII]-uridylyl-L-tyrosine + H2O = [protein-PII]-L-tyrosine + UMP + H(+). With respect to regulation, uridylyltransferase (UTase) activity is inhibited by glutamine, while glutamine activates uridylyl-removing (UR) activity. Functionally, modifies, by uridylylation and deuridylylation, the PII regulatory proteins (GlnB and homologs), in response to the nitrogen status of the cell that GlnD senses through the glutamine level. Under low glutamine levels, catalyzes the conversion of the PII proteins and UTP to PII-UMP and PPi, while under higher glutamine levels, GlnD hydrolyzes PII-UMP to PII and UMP (deuridylylation). Thus, controls uridylylation state and activity of the PII proteins, and plays an important role in the regulation of nitrogen assimilation and metabolism. This Ruegeria pomeroyi (strain ATCC 700808 / DSM 15171 / DSS-3) (Silicibacter pomeroyi) protein is Bifunctional uridylyltransferase/uridylyl-removing enzyme.